Here is a 214-residue protein sequence, read N- to C-terminus: Putative F-box protein At3g58910 (214 aa).

Residues 1-47 (MDRVSSLPDELLCHILSFLTTKETALTSLLSKREIIPLIKSVVFPTL) form the F-box domain.

The polypeptide is Putative F-box protein At3g58910 (Arabidopsis thaliana (Mouse-ear cress)).